The sequence spans 126 residues: Glycine cleavage system H protein (126 aa).

Residues 23–104 enclose the Lipoyl-binding domain; it reads KVRVGITDFA…YDEGWMIEII (82 aa). Lys64 carries the post-translational modification N6-lipoyllysine.

Belongs to the GcvH family. In terms of assembly, the glycine cleavage system is composed of four proteins: P, T, L and H. (R)-lipoate is required as a cofactor.

Functionally, the glycine cleavage system catalyzes the degradation of glycine. The H protein shuttles the methylamine group of glycine from the P protein to the T protein. The polypeptide is Glycine cleavage system H protein (Chlorobium phaeobacteroides (strain BS1)).